We begin with the raw amino-acid sequence, 397 residues long: Mannitol-1-phosphate 5-dehydrogenase (397 aa).

An NAD(+)-binding site is contributed by 9-20; that stretch reads AVHFGAGNIGRG. The active site involves lysine 220.

Belongs to the mannitol dehydrogenase family. Monomer.

It carries out the reaction D-mannitol 1-phosphate + NAD(+) = beta-D-fructose 6-phosphate + NADH + H(+). Its function is as follows. Catalyzes the NAD(H)-dependent interconversion of D-fructose 6-phosphate and D-mannitol 1-phosphate in the mannitol metabolic pathway. In Podospora anserina (strain S / ATCC MYA-4624 / DSM 980 / FGSC 10383) (Pleurage anserina), this protein is Mannitol-1-phosphate 5-dehydrogenase.